A 98-amino-acid polypeptide reads, in one-letter code: Integration host factor subunit alpha (98 aa).

Residues 49 to 70 are disordered; it reads FGNFDLRDKNQRPGRNPKTGED.

This sequence belongs to the bacterial histone-like protein family. Heterodimer of an alpha and a beta chain.

In terms of biological role, this protein is one of the two subunits of integration host factor, a specific DNA-binding protein that functions in genetic recombination as well as in transcriptional and translational control. The sequence is that of Integration host factor subunit alpha from Shewanella baltica (strain OS223).